The primary structure comprises 312 residues: R2-like ligand binding oxidase (312 aa).

Glu-68, Glu-101, and His-104 together coordinate Mn(2+). The 3-(O4'-tyrosyl)-valine (Val-Tyr) cross-link spans 71–162 (VTQDIQPFMA…AAQVRASATY (92 aa)). Glu-101 serves as a coordination point for Fe cation. Glu-167, Glu-202, and His-205 together coordinate Fe cation.

The protein belongs to the ribonucleoside diphosphate reductase small chain family. R2-like ligand binding oxidase subfamily. Homodimer. Requires Fe cation as cofactor. Mn(2+) serves as cofactor.

Functionally, probable oxidase that might be involved in lipid metabolism. The sequence is that of R2-like ligand binding oxidase from Mycobacterium sp. (strain JLS).